The primary structure comprises 198 residues: Photosystem I assembly protein Ycf4 (198 aa).

Residues 1–20 (MTASTTINKGDSPNGDSSAS) form a disordered region. The next 2 membrane-spanning stretches (helical) occupy residues 38-58 (WASI…SSYL) and 78-98 (LVMG…WLAI).

The protein belongs to the Ycf4 family.

The protein localises to the cellular thylakoid membrane. In terms of biological role, seems to be required for the assembly of the photosystem I complex. This chain is Photosystem I assembly protein Ycf4, found in Trichormus variabilis (strain ATCC 29413 / PCC 7937) (Anabaena variabilis).